The primary structure comprises 263 residues: Probable methylthioribulose-1-phosphate dehydratase (263 aa).

A substrate-binding site is contributed by C102. Residues H120 and H122 each contribute to the Zn(2+) site. E144 (proton donor/acceptor) is an active-site residue. H200 serves as a coordination point for Zn(2+).

Belongs to the aldolase class II family. MtnB subfamily. Zn(2+) is required as a cofactor.

It localises to the cytoplasm. The catalysed reaction is 5-(methylsulfanyl)-D-ribulose 1-phosphate = 5-methylsulfanyl-2,3-dioxopentyl phosphate + H2O. It functions in the pathway amino-acid biosynthesis; L-methionine biosynthesis via salvage pathway; L-methionine from S-methyl-5-thio-alpha-D-ribose 1-phosphate: step 2/6. Functionally, catalyzes the dehydration of methylthioribulose-1-phosphate (MTRu-1-P) into 2,3-diketo-5-methylthiopentyl-1-phosphate (DK-MTP-1-P). In Caenorhabditis elegans, this protein is Probable methylthioribulose-1-phosphate dehydratase.